The following is a 131-amino-acid chain: Glycine cleavage system H protein (131 aa).

The Lipoyl-binding domain maps to 24 to 106; the sequence is RAIVGISDHA…YGEGWIMVIE (83 aa). Lys65 bears the N6-lipoyllysine mark.

This sequence belongs to the GcvH family. In terms of assembly, the glycine cleavage system is composed of four proteins: P, T, L and H. It depends on (R)-lipoate as a cofactor.

Functionally, the glycine cleavage system catalyzes the degradation of glycine. The H protein shuttles the methylamine group of glycine from the P protein to the T protein. The sequence is that of Glycine cleavage system H protein from Xylella fastidiosa (strain 9a5c).